Here is a 218-residue protein sequence, read N- to C-terminus: MNVEDEVDLMKKMIIGRKIGMTQVFAEDGAAIPVTAIEVEPSVITQKKTVEKDGYDAIQLGYGRIKQNKATKPLQGHFAKADKGCFRILKEMRCDQIQEYELGQEITLDIFESGEMVDITGTTKGKGFAGVIKRHGFRGGRSSHGSMFHRAPGSIGASAYPSRVFKGKKLPGQMGNKQKTVKNLMIWSLRPERNLILIRGAVPGARNGYLFIKQSAKA.

It belongs to the universal ribosomal protein uL3 family. As to quaternary structure, part of the 50S ribosomal subunit. Forms a cluster with proteins L14 and L19.

Its function is as follows. One of the primary rRNA binding proteins, it binds directly near the 3'-end of the 23S rRNA, where it nucleates assembly of the 50S subunit. The protein is Large ribosomal subunit protein uL3 of Syntrophus aciditrophicus (strain SB).